A 379-amino-acid chain; its full sequence is Cytochrome b (379 aa).

A run of 4 helical transmembrane segments spans residues 34–54 (FGSLLGICLITQILTGLLLAM), 78–99 (WLIRNLHANGASFFFICIYLHI), 114–134 (WNTGVILLLTLMATAFVGYVL), and 179–199 (FFALHFLLPFLIAGITIIHLT). Residues histidine 84 and histidine 98 each contribute to the heme b site. Positions 183 and 197 each coordinate heme b. Histidine 202 contacts a ubiquinone. A run of 4 helical transmembrane segments spans residues 227–247 (LKDILGFTLMFIPLLILAFFS), 289–309 (LGGVLALAASVLILFLIPFLH), 321–341 (LSQMLFWLLVANLLILTWIGS), and 348–368 (FIIIGQTASFTYFLILLILFP).

The protein belongs to the cytochrome b family. As to quaternary structure, the cytochrome bc1 complex contains 11 subunits: 3 respiratory subunits (MT-CYB, CYC1 and UQCRFS1), 2 core proteins (UQCRC1 and UQCRC2) and 6 low-molecular weight proteins (UQCRH/QCR6, UQCRB/QCR7, UQCRQ/QCR8, UQCR10/QCR9, UQCR11/QCR10 and a cleavage product of UQCRFS1). This cytochrome bc1 complex then forms a dimer. It depends on heme b as a cofactor.

The protein resides in the mitochondrion inner membrane. Functionally, component of the ubiquinol-cytochrome c reductase complex (complex III or cytochrome b-c1 complex) that is part of the mitochondrial respiratory chain. The b-c1 complex mediates electron transfer from ubiquinol to cytochrome c. Contributes to the generation of a proton gradient across the mitochondrial membrane that is then used for ATP synthesis. This Dromaius novaehollandiae (Emu) protein is Cytochrome b (MT-CYB).